The sequence spans 189 residues: MIIIISGPPGSGKTSVAIKLANELSYKFISAGKIFRDIAQKMGLDIINLNKVAESNFDIDKMVDKKIFEFILSEKNLIIESHIAGWLFREYTNIAIYLWAPLKIRANRIAIRDKISYDQAISQIIKREYMHYKRFNKFYGIDINDLSVFDLVINTSNVDVNNIVKLILTYLSLVSQNPQPLKEKDINDK.

7–15 (GPPGSGKTS) is a binding site for ATP.

This sequence belongs to the cytidylate kinase family. Type 2 subfamily.

It is found in the cytoplasm. It carries out the reaction CMP + ATP = CDP + ADP. The enzyme catalyses dCMP + ATP = dCDP + ADP. In Saccharolobus islandicus (strain Y.N.15.51 / Yellowstone #2) (Sulfolobus islandicus), this protein is Cytidylate kinase.